We begin with the raw amino-acid sequence, 336 residues long: Heme A synthase (336 aa).

The next 8 membrane-spanning stretches (helical) occupy residues 5 to 25 (LTRWLLTCCIMVVAMIIVGGI), 92 to 112 (GRATGLIYILPLIYFYFKGII), 117 to 137 (ILSYIIVLLLFCVQGFMGWYM), 153 to 173 (LAFHLIIAVIIYHLLFYKLVK), 191 to 211 (LIFSVAAIAMIYVQIFLGALV), 253 to 273 (FIHRLGAYSLSIIVIALIISL), 284 to 304 (VAFYLSIALLIQLSTGVITLL), and 307 to 327 (VPIIAASMHQFFAIVLLSVVI). His-255 serves as a coordination point for heme. Residue His-315 coordinates heme.

The protein belongs to the COX15/CtaA family. Type 2 subfamily. In terms of assembly, interacts with CtaB. It depends on heme b as a cofactor.

Its subcellular location is the cell membrane. It carries out the reaction Fe(II)-heme o + 2 A + H2O = Fe(II)-heme a + 2 AH2. The protein operates within porphyrin-containing compound metabolism; heme A biosynthesis; heme A from heme O: step 1/1. Catalyzes the conversion of heme O to heme A by two successive hydroxylations of the methyl group at C8. The first hydroxylation forms heme I, the second hydroxylation results in an unstable dihydroxymethyl group, which spontaneously dehydrates, resulting in the formyl group of heme A. In Rickettsia bellii (strain RML369-C), this protein is Heme A synthase.